We begin with the raw amino-acid sequence, 395 residues long: ETS-related transcription factor Elf-3 (395 aa).

The 87-residue stretch at 69 to 155 folds into the PNT domain; the sequence is EPPAVLHLAE…AQLRDLTSSS (87 aa). Over residues 200-240 the composition is skewed to low complexity; it reads ASPYYGSSYGPGAPSPGSSDFSTSGTDTPQSSHSSDSGGSD. The disordered stretch occupies residues 200-275; that stretch reads ASPYYGSSYG…HGKRKRGRPR (76 aa). Residues 246-265 show a composition bias toward basic and acidic residues; it reads TDSKVFPRDGFPDYKKGEPK. Residues 266–275 show a composition bias toward basic residues; it reads HGKRKRGRPR. The segment at residues 297–379 is a DNA-binding region (ETS); that stretch reads THLWEFIRDI…DGRRLVYKFG (83 aa).

Belongs to the ETS family. As to quaternary structure, interacts with TBP. Interacts with CREBBP and EP300; these act as transcriptional coactivators of ELF3 and positively modulate its function. Interacts with XRCC5/KU86 and XRCC6/KU70; these inhibit the ability of ELF3 to bind DNA and negatively modulate its transcriptional activity. Associated with CLND7 and POU2F3. Interacts with ZNF768.

It is found in the cytoplasm. Its subcellular location is the nucleus. Functionally, transcriptional activator that binds and transactivates ETS sequences containing the consensus nucleotide core sequence GGA[AT]. Acts synergistically with POU2F3 to transactivate the SPRR2A promoter and with RUNX1 to transactivate the ANGPT1 promoter. Also transactivates collagenase, CCL20, CLND7, FLG, KRT8, NOS2, PTGS2, SPRR2B, TGFBR2 and TGM3 promoters. Represses KRT4 promoter activity. Involved in mediating vascular inflammation. May play an important role in epithelial cell differentiation and tumorigenesis. May be a critical downstream effector of the ERBB2 signaling pathway. May be associated with mammary gland development and involution. Plays an important role in the regulation of transcription with TATA-less promoters in preimplantation embryos, which is essential in preimplantation development. This Rattus norvegicus (Rat) protein is ETS-related transcription factor Elf-3.